The primary structure comprises 274 residues: Large ribosomal subunit protein uL2cz/uL2cy (274 aa).

2 disordered regions span residues 1 to 25 (MAIH…VKSN) and 223 to 274 (MNPV…RRTK).

Belongs to the universal ribosomal protein uL2 family. In terms of assembly, part of the 50S ribosomal subunit.

The protein localises to the plastid. It is found in the chloroplast. In Citrus sinensis (Sweet orange), this protein is Large ribosomal subunit protein uL2cz/uL2cy (rpl2-A).